Reading from the N-terminus, the 512-residue chain is MATANGAVENGQPDGKPPALPRPIRNLEVKFTKIFINNDWHEPKSGRKFATYNPSTLEKICEVEEGDKPDVDKAVEAAQAAFQRGSPWRRLDALSRGQLLHQLADLIERDRAILATLETMDTGKPFLHAFFVDLEGCIKTFRYFAGWADKIQGRTIPTDDNVMCFTRHEPIGVCGAITPWNFPLLMLAWKLAPALCCGNTVVLKPAEQTPLTALYLASLIKEVGFPPGVVNIVPGFGPTVGAAISSHPQINKIAFTGSTEVGKLVKEAASRSNLKRVTLELGGRNPCIVCADADLDLAVECAHQGVFFNQGQCCTAASRVFVEEQVYGEFVRRSVEFAKKRPVGDPFDAKTEQGPQIDQKQFDKILELIESGKKEGAKLECGGSAMEDRGLFIKPTVFSDVTDNMRIAKEEIFGPVQPILKFKNLEEVIKRANSTDYGLTAAVFTKNLDKALKLASALESGTVWVNCYNAFYAQAPFGGFKMSGNGRELGEYALAEYTEVKTVTIKLDEKNP.

Residues 1-23 (MATANGAVENGQPDGKPPALPRP) are disordered. A2 bears the N-acetylalanine mark. NAD(+)-binding positions include K204, E207, and 257-262 (GSTEVG). E280 functions as the Proton acceptor in the catalytic mechanism. Residue C314 is the Nucleophile of the active site. The NAD(+) site is built by Q361 and E411.

The protein belongs to the aldehyde dehydrogenase family. In terms of assembly, homotetramer.

The protein resides in the cytoplasm. The enzyme catalyses all-trans-retinal + NAD(+) + H2O = all-trans-retinoate + NADH + 2 H(+). It carries out the reaction retinal + NAD(+) + H2O = retinoate + NADH + 2 H(+). It catalyses the reaction all-trans-13,14-dihydroretinal + NAD(+) + H2O = all-trans-13,14-dihydroretinoate + NADH + 2 H(+). The protein operates within cofactor metabolism; retinol metabolism. Catalyzes the NAD-dependent oxidation of aldehyde substrates, such as all-trans-retinal and all-trans-13,14-dihydroretinal, to their corresponding carboxylic acids, all-trans-retinoate and all-trans-13,14-dihydroretinoate, respectively. High specificity for all-trans-retinal as substrate, can also accept acetaldehyde as substrate in vitro but with lower affinity. Required for the biosynthesis of normal levels of retinoate in the embryonic ocular and nasal regions; a critical lipid in the embryonic development of the eye and the nasal region. In Rattus norvegicus (Rat), this protein is Retinaldehyde dehydrogenase 3 (Aldh1a3).